Consider the following 611-residue polypeptide: MKLLVVTILAGLAVCHGATKEEIVATEYLQNINKELAKHTNVETEVSWAYASNITDENERLRNEISAENAKFLKEVAKDIQKFNWRTYGSADVRRQFKSLSKTGYSALPAEDYAELLEVLSAMESNFAKVRVCDYKNSAKCDLSLDPEIEEIITKSRDPEELKYYWTQFYDKAGTPTRSNFEKYVELNTKSAKLNNFTDGAEVWLDEYEDATFEDQLEAIFEDIKPLYDQVHGYVRYRLNKFYGDEVVSKTGPLPMHLLGNMWAQQWSSIADIVSPFPEKPLVDVSDEMVAQGYTPLKMFQMGDDFFQSMGLKKLPQEFWDKSILEKPDDGRDLVCHASAWDFYLTDDVRIKQCTRVTQDQFFTVHHEMGHIQYFLQYQHQPFVYRTGANPGFHEAVGDVLSLSVSTPKHLERVGLLKNYVSDNEARINQLFLTALDKIVFLPFAFTMDKYRWALFRGQADKSEWNCAFWKLREEYSGIEPPVVRTEKDFDAPAKYHVSADVEYLRYLVSFIIQFQFYKSACITAGEYVPNQTEYPLDNCDIYGSKEAGKLFENMLSLGASKPWPDALEAFNGERTMTGKAIAEYFEPLRVWLEAVAVESLCHQRYKNVDL.

Residues 1-17 (MKLLVVTILAGLAVCHG) form the signal peptide. The Peptidase M2 domain occupies 19–607 (TKEEIVATEY…VESLCHQRYK (589 aa)). Asparagine 53 carries N-linked (GlcNAc...) asparagine glycosylation. Residues cysteine 133 and cysteine 141 are joined by a disulfide bond. A glycan (N-linked (GlcNAc...) asparagine) is linked at asparagine 196. Residues cysteine 336 and cysteine 354 are joined by a disulfide bond. Residue histidine 367 participates in Zn(2+) binding. Glutamate 368 (proton acceptor) is an active-site residue. Positions 371 and 395 each coordinate Zn(2+). The active-site Proton donor is the histidine 497. The cysteines at positions 522 and 540 are disulfide-linked. Asparagine 531 is a glycosylation site (N-linked (GlcNAc...) asparagine).

It belongs to the peptidase M2 family. Zn(2+) is required as a cofactor. In terms of tissue distribution, expressed in the compound ganglion and in the posterior region of the midgut.

It is found in the secreted. The protein localises to the extracellular space. The catalysed reaction is Release of a C-terminal dipeptide, oligopeptide-|-Xaa-Yaa, when Xaa is not Pro, and Yaa is neither Asp nor Glu. Thus, conversion of angiotensin I to angiotensin II, with increase in vasoconstrictor activity, but no action on angiotensin II.. Its function is as follows. Involved in the specific maturation or degradation of a number of bioactive peptides. In Haematobia irritans exigua (Buffalo fly), this protein is Angiotensin-converting enzyme (ACE).